A 135-amino-acid chain; its full sequence is Small ribosomal subunit protein eS6 (135 aa).

This sequence belongs to the eukaryotic ribosomal protein eS6 family.

The sequence is that of Small ribosomal subunit protein eS6 from Methanococcoides burtonii (strain DSM 6242 / NBRC 107633 / OCM 468 / ACE-M).